A 736-amino-acid polypeptide reads, in one-letter code: Catalase-peroxidase (736 aa).

A disordered region spans residues 1-25 (MSENGKCPVTGKTSKPVAGGGTSNQ). Positions 96–224 (WHSAGTYRMG…LAAVQMGLIY (129 aa)) form a cross-link, tryptophyl-tyrosyl-methioninium (Trp-Tyr) (with M-250). Residue H97 is the Proton acceptor of the active site. The tryptophyl-tyrosyl-methioninium (Tyr-Met) (with W-96) cross-link spans 224–250 (YVNPEGPDGNPDPIASGKDVRETFARM). Residue H265 participates in heme b binding. The segment at 294 to 313 (GWKSSHGRGKGGDTISSGIE) is disordered.

This sequence belongs to the peroxidase family. Peroxidase/catalase subfamily. In terms of assembly, homodimer or homotetramer. Heme b is required as a cofactor. Post-translationally, formation of the three residue Trp-Tyr-Met cross-link is important for the catalase, but not the peroxidase activity of the enzyme.

The catalysed reaction is H2O2 + AH2 = A + 2 H2O. It catalyses the reaction 2 H2O2 = O2 + 2 H2O. Functionally, bifunctional enzyme with both catalase and broad-spectrum peroxidase activity. The protein is Catalase-peroxidase of Desulfatibacillum aliphaticivorans.